The chain runs to 222 residues: Cytochrome b6 (222 aa).

The helical transmembrane segment at 39–59 (IFYCLGGITLTCFLIQFATGF) threads the bilayer. Cys42 is a heme c binding site. Heme b-binding residues include His93 and His107. 3 helical membrane-spanning segments follow: residues 97 to 117 (ASMM…TGGF), 123 to 143 (LTWV…VTGY), and 193 to 213 (LHTF…FLMI). Heme b is bound by residues His194 and His209.

This sequence belongs to the cytochrome b family. PetB subfamily. In terms of assembly, the 4 large subunits of the cytochrome b6-f complex are cytochrome b6, subunit IV (17 kDa polypeptide, PetD), cytochrome f and the Rieske protein, while the 4 small subunits are PetG, PetL, PetM and PetN. The complex functions as a dimer. Heme b serves as cofactor. Heme c is required as a cofactor.

The protein localises to the cellular thylakoid membrane. Component of the cytochrome b6-f complex, which mediates electron transfer between photosystem II (PSII) and photosystem I (PSI), cyclic electron flow around PSI, and state transitions. This chain is Cytochrome b6, found in Cyanothece sp. (strain PCC 7425 / ATCC 29141).